A 578-amino-acid polypeptide reads, in one-letter code: Vi polysaccharide biosynthesis protein VipC/TviE (578 aa).

Its pathway is glycan metabolism; Vi-antigen biosynthesis. The protein operates within capsule biogenesis; capsule polysaccharide biosynthesis. In Salmonella typhi, this protein is Vi polysaccharide biosynthesis protein VipC/TviE (vipC).